A 105-amino-acid chain; its full sequence is MEIKIIEKKENPLLNRTEIKFECEYPTEGTPTILDVKHKLVALEDSSNDLLVVDSMKPSYGVPTAFGLAKIYDSTESLAKIETKSVIAKNEEPEEEPEEEAEDAE.

Positions 85–105 (SVIAKNEEPEEEPEEEAEDAE) are disordered. The segment covering 92–105 (EPEEEPEEEAEDAE) has biased composition (acidic residues).

The protein belongs to the eukaryotic ribosomal protein eS24 family.

This Methanosphaera stadtmanae (strain ATCC 43021 / DSM 3091 / JCM 11832 / MCB-3) protein is Small ribosomal subunit protein eS24.